The primary structure comprises 135 residues: Type 3 secretion system stator protein (135 aa).

The protein belongs to the SctL stator family. In terms of assembly, the core secretion machinery of the T3SS is composed of approximately 20 different proteins, including cytoplasmic components, a base, an export apparatus and a needle. This subunit is part of the cytosolic complex.

The protein localises to the cytoplasm. In terms of biological role, component of the type III secretion system (T3SS), also called injectisome, which is used to inject bacterial effector proteins into eukaryotic host cells. Acts as a regulator of the HrcN/SctN ATPase activity. This chain is Type 3 secretion system stator protein, found in Rhizobium fredii (Sinorhizobium fredii).